The sequence spans 256 residues: POU domain class 2-associating factor 1 (256 aa).

The interval methionine 1 to valine 24 is disordered. An OCA domain is found at proline 16–histidine 38.

Belongs to the POU2AF family. As to quaternary structure, interacts with POU2F1/OCT1 and POU2F2/OCT2; the interaction increases POU2F1 and POU2F2 transactivation activity. In terms of processing, ubiquitinated; mediated by SIAH1 or SIAH2 and leading to its subsequent proteasomal degradation. As to expression, B-cell specific.

It is found in the nucleus. In terms of biological role, transcriptional coactivator that specifically associates with either POU2F1/OCT1 or POU2F2/OCT2. It boosts the POU2F1/OCT1 mediated promoter activity and to a lesser extent, that of POU2F2/OCT2. It recognizes the POU domains of POU2F1/OCT1 and POU2F2/OCT2. It is essential for the response of B-cells to antigens and required for the formation of germinal centers. Regulates IL6 expression in B cells as POU2F2/OCT2 coactivator. The sequence is that of POU domain class 2-associating factor 1 from Mus musculus (Mouse).